The chain runs to 424 residues: Glutamyl-tRNA reductase (424 aa).

Residues 49–52, serine 105, 110–112, and glutamine 116 contribute to the substrate site; these read TCNR and EPQ. Cysteine 50 functions as the Nucleophile in the catalytic mechanism. 185–190 lines the NADP(+) pocket; it reads GSGETA.

The protein belongs to the glutamyl-tRNA reductase family. As to quaternary structure, homodimer.

It carries out the reaction (S)-4-amino-5-oxopentanoate + tRNA(Glu) + NADP(+) = L-glutamyl-tRNA(Glu) + NADPH + H(+). It functions in the pathway porphyrin-containing compound metabolism; protoporphyrin-IX biosynthesis; 5-aminolevulinate from L-glutamyl-tRNA(Glu): step 1/2. Catalyzes the NADPH-dependent reduction of glutamyl-tRNA(Glu) to glutamate 1-semialdehyde (GSA). The protein is Glutamyl-tRNA reductase of Legionella pneumophila (strain Paris).